A 457-amino-acid polypeptide reads, in one-letter code: SSSAPLLFPLVSCDSSLPDETQVTLGCLARDFLPRPVTFSWKFKNSSSISSQNIYNFPEVFTGGKYMATSQVLLPSTAILQSTDDYITCHTKHTTGEKEKKVELQVTPELPPNVSIFVPPRNSFSGNHPRTSQLICQASGFSPRTIVMSWLQRGEPVQPSLVSTSAVEAEPKGSGPTTFRVISRLTITENEWLSQREFTCQALHKGLTFQKNVSSVCMGDDTSTGISVFLLPPTFANIFLTQSAQLTCLVTGLATYDSLDISWSRQNGEALQTHVNISESHPNSTFTAKGHASVCREEWESGEKFTCTVQHSDLPSPLKQSLSRPKDVANDPPSVFVLPPAQEQLKLRESASITCLVKDFSPPDVFVQWQHHGQPVDPKHYVTSNPTPEPQNPGLYFVHSILTVSEKDWSSGESFSCVVGHEALPLSVTEKAVDKTSGKPTLYNVSLVLSDTASTCY.

Residues S1–Q105 are CH1. An intrachain disulfide couples C27 to C89. N-linked (GlcNAc...) asparagine glycosylation is found at N45 and N113. The tract at residues V106–D220 is CH2. C136 and C200 are joined by a disulfide. N212, N276, and N283 each carry an N-linked (GlcNAc...) asparagine glycan. The CH3 stretch occupies residues D221–K326. 2 disulfides stabilise this stretch: C248-C307 and C355-C417. The CH4 stretch occupies residues D327–Y457. N444 carries an N-linked (GlcNAc...) asparagine glycan.

This Suncus murinus (Asian house shrew) protein is Ig mu chain C region.